We begin with the raw amino-acid sequence, 942 residues long: PH and SEC7 domain-containing protein C11E3.11c (942 aa).

Residues 1-18 (MSRNASNAYLKNGNSTPS) are compositionally biased toward polar residues. Disordered regions lie at residues 1–128 (MSRN…TRLN) and 259–308 (SRNL…ETTR). Low complexity predominate over residues 24–40 (PSSLSQRSKTSTRSSKP). 4 stretches are compositionally biased toward polar residues: residues 50–60 (WFKNESSSRHP), 90–125 (ASMSTNDLPSHPRSQSVMGFSSSTSQLTGTSNSSRT), 271–284 (YGNSRTPLRDSSNY), and 292–305 (NRQSSLSIPKSTSE). Residues 295–497 (SSLSIPKSTS…LSSYKSFASN (203 aa)) enclose the SEC7 domain. Residues 681–804 (PYIKQGILKF…WIDALNYWAA (124 aa)) form the PH domain.

The chain is PH and SEC7 domain-containing protein C11E3.11c from Schizosaccharomyces pombe (strain 972 / ATCC 24843) (Fission yeast).